The primary structure comprises 95 residues: Aspartyl/glutamyl-tRNA(Asn/Gln) amidotransferase subunit C (95 aa).

The protein belongs to the GatC family. As to quaternary structure, heterotrimer of A, B and C subunits.

It catalyses the reaction L-glutamyl-tRNA(Gln) + L-glutamine + ATP + H2O = L-glutaminyl-tRNA(Gln) + L-glutamate + ADP + phosphate + H(+). The enzyme catalyses L-aspartyl-tRNA(Asn) + L-glutamine + ATP + H2O = L-asparaginyl-tRNA(Asn) + L-glutamate + ADP + phosphate + 2 H(+). Functionally, allows the formation of correctly charged Asn-tRNA(Asn) or Gln-tRNA(Gln) through the transamidation of misacylated Asp-tRNA(Asn) or Glu-tRNA(Gln) in organisms which lack either or both of asparaginyl-tRNA or glutaminyl-tRNA synthetases. The reaction takes place in the presence of glutamine and ATP through an activated phospho-Asp-tRNA(Asn) or phospho-Glu-tRNA(Gln). The sequence is that of Aspartyl/glutamyl-tRNA(Asn/Gln) amidotransferase subunit C from Paracoccus denitrificans (strain Pd 1222).